Consider the following 349-residue polypeptide: Microfibril-associated glycoprotein 3 (349 aa).

Residues 1–21 (MKLHHCLSFLLVVTLVPAALS) form the signal peptide. Over 22 to 139 (LEDVAPLGAN…TLRVIFTSGD (118 aa)) the chain is Extracellular. Asn31, Asn36, Asn63, and Asn103 each carry an N-linked (GlcNAc...) asparagine glycan. The Ig-like C2-type domain occupies 41–130 (PSFELSAGSY…SPARASYSVT (90 aa)). A disulfide bridge connects residues Cys68 and Cys117. The helical transmembrane segment at 140–160 (MSVYYMVVCLIAFTITLILNV) threads the bilayer. Topologically, residues 161–349 (TRLCLMSTHL…EGSIHHRVSI (189 aa)) are cytoplasmic. The interval 280 to 349 (NPELGRSNSP…EGSIHHRVSI (70 aa)) is disordered. The segment covering 311–331 (VHLQSETKSIGTDSQDSSHFS) has biased composition (polar residues).

In terms of processing, glycosylated.

It localises to the cell membrane. Functionally, component of the elastin-associated microfibrils. The chain is Microfibril-associated glycoprotein 3 (Mfap3) from Mus musculus (Mouse).